The following is a 936-amino-acid chain: Protein translocase subunit SecA (936 aa).

Residues Gln-87, 105-109, and Asp-515 each bind ATP; that span reads GEGKT. Residues Cys-920, Cys-922, Cys-931, and His-932 each coordinate Zn(2+).

This sequence belongs to the SecA family. In terms of assembly, monomer and homodimer. Part of the essential Sec protein translocation apparatus which comprises SecA, SecYEG and auxiliary proteins SecDF-YajC and YidC. The cofactor is Zn(2+).

Its subcellular location is the cell inner membrane. The protein localises to the cytoplasm. It catalyses the reaction ATP + H2O + cellular proteinSide 1 = ADP + phosphate + cellular proteinSide 2.. Functionally, part of the Sec protein translocase complex. Interacts with the SecYEG preprotein conducting channel. Has a central role in coupling the hydrolysis of ATP to the transfer of proteins into and across the cell membrane, serving both as a receptor for the preprotein-SecB complex and as an ATP-driven molecular motor driving the stepwise translocation of polypeptide chains across the membrane. In Paraburkholderia xenovorans (strain LB400), this protein is Protein translocase subunit SecA.